The chain runs to 460 residues: UDP-N-acetylmuramoylalanine--D-glutamate ligase (460 aa).

115–121 (GTDGKTT) serves as a coordination point for ATP.

This sequence belongs to the MurCDEF family.

It is found in the cytoplasm. The enzyme catalyses UDP-N-acetyl-alpha-D-muramoyl-L-alanine + D-glutamate + ATP = UDP-N-acetyl-alpha-D-muramoyl-L-alanyl-D-glutamate + ADP + phosphate + H(+). Its pathway is cell wall biogenesis; peptidoglycan biosynthesis. Functionally, cell wall formation. Catalyzes the addition of glutamate to the nucleotide precursor UDP-N-acetylmuramoyl-L-alanine (UMA). The polypeptide is UDP-N-acetylmuramoylalanine--D-glutamate ligase (Chlorobium luteolum (strain DSM 273 / BCRC 81028 / 2530) (Pelodictyon luteolum)).